The chain runs to 246 residues: Pyridoxine 5'-phosphate synthase (246 aa).

Asparagine 7 is a binding site for 3-amino-2-oxopropyl phosphate. Aspartate 9–histidine 10 serves as a coordination point for 1-deoxy-D-xylulose 5-phosphate. Arginine 18 is a 3-amino-2-oxopropyl phosphate binding site. Histidine 43 acts as the Proton acceptor in catalysis. Residues arginine 45 and histidine 50 each contribute to the 1-deoxy-D-xylulose 5-phosphate site. The active-site Proton acceptor is glutamate 70. Threonine 100 contributes to the 1-deoxy-D-xylulose 5-phosphate binding site. Histidine 190 serves as the catalytic Proton donor. 3-amino-2-oxopropyl phosphate-binding positions include glycine 191 and glycine 212–histidine 213.

The protein belongs to the PNP synthase family. Homooctamer; tetramer of dimers.

It is found in the cytoplasm. The enzyme catalyses 3-amino-2-oxopropyl phosphate + 1-deoxy-D-xylulose 5-phosphate = pyridoxine 5'-phosphate + phosphate + 2 H2O + H(+). It functions in the pathway cofactor biosynthesis; pyridoxine 5'-phosphate biosynthesis; pyridoxine 5'-phosphate from D-erythrose 4-phosphate: step 5/5. Its function is as follows. Catalyzes the complicated ring closure reaction between the two acyclic compounds 1-deoxy-D-xylulose-5-phosphate (DXP) and 3-amino-2-oxopropyl phosphate (1-amino-acetone-3-phosphate or AAP) to form pyridoxine 5'-phosphate (PNP) and inorganic phosphate. The protein is Pyridoxine 5'-phosphate synthase of Prochlorococcus marinus (strain SARG / CCMP1375 / SS120).